Consider the following 368-residue polypeptide: MKAIVVKPPNPGVEIKDVKDDENKLSNIGLVKVKILENGICGTDREIVSGKRTSVKPPIGKDELILGHEAIGIVEVGGYGFKEGELVMPINKRGCGKCLNCLIGRPDFCETGEGLVAGTKGLDGFMREYLYDDPKYLVKIPPAIKDIAILAQPLADIEKSVESILTSQKRIPIWTCDDGTLNCRKALVVGTGPTGILFSLVLRTYGFQVWIANRRELLDNEKEILDEPRILFYNSAKGYESLVKDVDKFDLIIDTTGASASIIQELVPLLQINGVLGLFGFPRYDNFSLDYKIVQDFVINNRIIIGLDNGQKPHFQQALIHLASWKSLWPKTASKMITKIISINDEREVISSLREKLPGEIKVKIVWE.

C41 serves as a coordination point for Zn(2+). T43 provides a ligand contact to substrate. Positions 68 and 69 each coordinate Zn(2+). A substrate-binding site is contributed by N91. 5 residues coordinate Zn(2+): C95, C98, C101, C109, and Q152. Q152 and D156 together coordinate substrate. NADP(+) contacts are provided by residues 213 to 215, 279 to 281, 307 to 309, and K356; these read NRR, FGF, and LDN. N309 lines the substrate pocket.

This sequence belongs to the zinc-containing alcohol dehydrogenase family. Glucose 1-dehydrogenase subfamily. Requires Zn(2+) as cofactor.

The enzyme catalyses D-glucose + NAD(+) = D-glucono-1,5-lactone + NADH + H(+). It carries out the reaction D-glucose + NADP(+) = D-glucono-1,5-lactone + NADPH + H(+). Catalyzes the NAD(P)(+)-dependent oxidation of D-glucose to D-gluconate via gluconolactone. Can utilize both NAD(+) and NADP(+) as electron acceptor. Is involved in the degradation of glucose through a non-phosphorylative variant of the Entner-Doudoroff pathway. This is Glucose 1-dehydrogenase 2 from Saccharolobus solfataricus (strain ATCC 35092 / DSM 1617 / JCM 11322 / P2) (Sulfolobus solfataricus).